A 380-amino-acid polypeptide reads, in one-letter code: tRNA-specific 2-thiouridylase MnmA (380 aa).

Residues 26-33 (AMSGGVDS) and leucine 52 contribute to the ATP site. The active-site Nucleophile is the cysteine 120. A disulfide bridge links cysteine 120 with cysteine 217. An ATP-binding site is contributed by glycine 144. The interval 166-168 (RDQ) is interaction with tRNA. Cysteine 217 functions as the Cysteine persulfide intermediate in the catalytic mechanism.

The protein belongs to the MnmA/TRMU family.

It localises to the cytoplasm. It carries out the reaction S-sulfanyl-L-cysteinyl-[protein] + uridine(34) in tRNA + AH2 + ATP = 2-thiouridine(34) in tRNA + L-cysteinyl-[protein] + A + AMP + diphosphate + H(+). Functionally, catalyzes the 2-thiolation of uridine at the wobble position (U34) of tRNA, leading to the formation of s(2)U34. This chain is tRNA-specific 2-thiouridylase MnmA, found in Roseobacter denitrificans (strain ATCC 33942 / OCh 114) (Erythrobacter sp. (strain OCh 114)).